The following is a 508-amino-acid chain: MKLAYWMYAGPAHIGTLRIASSFKNVHAIMHAPLGDDYFNVMRSMLERERDFTPVTASVVDRNVLARGSQEKVVDNIVRKDQEETPDLIVLTPTCTSSILQEDLQNFVDRAQMDAKGDVMLADVNHYRVNELQAADRTLQQIVQYYLEKGRKKGELPTGKTEKPSVNIIGMTTLGFHNQHDCTELKRLMADLGIEVNEVIPEGASVQNLKNLPRAWFNLVPYREVGLMAARYLEQEFSMPYVDITPMGVVETARCIRKMGQLLNQQGANVDYEEFINQQTLYVSQAAWFSRSIDCQNLTGKKAVVFGDNTHAAAMTRILAREMGIHVVLAGTYCKYDADWFKEQVREYCDEILISEDHGEIADAIARIEPSAIFGTQMERHVGKRLDIPCGVIAAPIHIQNFPIGYKPFLGYEGTNQIADLVYNSFTLGMEDHLLEIFGGHDTKEVITKSVSADSDLNWNKEAQTELNKVPGFVRGKVKRNTEKFARERGFSEITLEVMYAAKEAVGA.

Aspartate 36 contacts [4Fe-4S] cluster. Aspartate 294 serves as the catalytic Proton donor. 429–430 provides a ligand contact to substrate; sequence GM.

It belongs to the ChlB/BchB/BchZ family. Protochlorophyllide reductase is composed of three subunits; ChlL, ChlN and ChlB. Forms a heterotetramer of two ChlB and two ChlN subunits. It depends on [4Fe-4S] cluster as a cofactor.

The enzyme catalyses chlorophyllide a + oxidized 2[4Fe-4S]-[ferredoxin] + 2 ADP + 2 phosphate = protochlorophyllide a + reduced 2[4Fe-4S]-[ferredoxin] + 2 ATP + 2 H2O. Its pathway is porphyrin-containing compound metabolism; chlorophyll biosynthesis (light-independent). Its function is as follows. Component of the dark-operative protochlorophyllide reductase (DPOR) that uses Mg-ATP and reduced ferredoxin to reduce ring D of protochlorophyllide (Pchlide) to form chlorophyllide a (Chlide). This reaction is light-independent. The NB-protein (ChlN-ChlB) is the catalytic component of the complex. This is Light-independent protochlorophyllide reductase subunit B from Gloeothece citriformis (strain PCC 7424) (Cyanothece sp. (strain PCC 7424)).